The primary structure comprises 509 residues: ATP synthase subunit alpha (509 aa).

169 to 176 lines the ATP pocket; sequence GDRQTGKT.

This sequence belongs to the ATPase alpha/beta chains family. In terms of assembly, F-type ATPases have 2 components, CF(1) - the catalytic core - and CF(0) - the membrane proton channel. CF(1) has five subunits: alpha(3), beta(3), gamma(1), delta(1), epsilon(1). CF(0) has three main subunits: a(1), b(2) and c(9-12). The alpha and beta chains form an alternating ring which encloses part of the gamma chain. CF(1) is attached to CF(0) by a central stalk formed by the gamma and epsilon chains, while a peripheral stalk is formed by the delta and b chains.

Its subcellular location is the cell inner membrane. It carries out the reaction ATP + H2O + 4 H(+)(in) = ADP + phosphate + 5 H(+)(out). Its function is as follows. Produces ATP from ADP in the presence of a proton gradient across the membrane. The alpha chain is a regulatory subunit. This is ATP synthase subunit alpha from Brucella abortus (strain S19).